The sequence spans 173 residues: Ferritin heavy chain (173 aa).

The region spanning 6–155 (QNFHEECERG…GYVTNLKRCG (150 aa)) is the Ferritin-like diiron domain. The Fe cation site is built by Glu23, Glu58, His61, Glu103, and Gln137.

Belongs to the ferritin family. As to quaternary structure, oligomer of 24 subunits. There are two types of subunits: L (light) chain and H (heavy) chain. The functional molecule is roughly spherical and contains a central cavity into which the insoluble mineral iron core is deposited.

The protein localises to the cytoplasm. It carries out the reaction 4 Fe(2+) + O2 + 4 H(+) = 4 Fe(3+) + 2 H2O. Its function is as follows. Stores iron in a soluble, non-toxic, readily available form. Important for iron homeostasis. Has ferroxidase activity. Iron is taken up in the ferrous form and deposited as ferric hydroxides after oxidation. This chain is Ferritin heavy chain, found in Echinococcus granulosus (Hydatid tapeworm).